Consider the following 138-residue polypeptide: MGTFTYERQVYLADTDGAGVVYFNQFLQMCHEAYESWLSSEHLSLQNIISVGDFALPLVHASIDFFAPAHCGDRLLVNLTITQASAHRFCCDYEISQAESAQLLARAQTHHVCIALPERKKAPLPQPWQTAICDLDHP.

Asp16 is a catalytic residue.

It belongs to the 4-hydroxybenzoyl-CoA thioesterase family. DHNA-CoA hydrolase subfamily.

It catalyses the reaction 1,4-dihydroxy-2-naphthoyl-CoA + H2O = 1,4-dihydroxy-2-naphthoate + CoA + H(+). It functions in the pathway cofactor biosynthesis; phylloquinone biosynthesis. It participates in quinol/quinone metabolism; 1,4-dihydroxy-2-naphthoate biosynthesis; 1,4-dihydroxy-2-naphthoate from chorismate: step 7/7. Its function is as follows. Catalyzes the specific hydrolysis of 1,4-dihydroxy-2-naphthoyl-CoA (DHNA-CoA) to 1,4-dihydroxy-2-naphthoate (DHNA), a reaction involved in phylloquinone (vitamin K1) biosynthesis. Is not active on benzoyl-CoA, phenylacetyl-CoA and aliphatic acyl-CoA thioesters. The protein is 1,4-dihydroxy-2-naphthoyl-CoA hydrolase of Synechocystis sp. (strain ATCC 27184 / PCC 6803 / Kazusa).